Reading from the N-terminus, the 1315-residue chain is Tetratricopeptide repeat protein 21B (1315 aa).

TPR repeat units lie at residues 108-141, 145-178, 192-225, 285-323, 324-357, 492-525, 563-596, 616-649, 721-754, 756-788, 790-821, 830-863, 883-916, 918-950, 951-984, 1022-1055, 1196-1229, 1231-1263, and 1265-1298; these read RKAL…PHDS, PILK…GNDI, QNYS…QLAL, AQLF…TPQQ, AEIA…NESN, PQAV…SPSY, PLYH…PGMR, LSIF…FSGT, PRSF…NPKD, TLAR…GQQN, LCYD…EPVS, GRSQ…QARI, AEIC…CETD, KIML…DQDN, EPAT…KPDN, PGFQ…SDWG, EKSW…NRSC, KAYE…SNQT, and PAVG…HPTY.

It belongs to the TTC21 family. Component of the IFT complex A (IFT-A) complex. IFT-A complex is divided into a core subcomplex composed of IFT122:IFT140:WDR19 which is associated with TULP3 and a peripheral subcomplex composed of IFT43:WDR35:TTC21B. Interacts directy with WDR35 and TTC21B. Interacts with TTC25.

The protein resides in the cytoplasm. It is found in the cytoskeleton. It localises to the cilium axoneme. Component of the IFT complex A (IFT-A), a complex required for retrograde ciliary transport and entry into cilia of G protein-coupled receptors (GPCRs). Essential for retrograde trafficking of IFT-1, IFT-B and GPCRs. Negatively modulates the SHH signal transduction. This chain is Tetratricopeptide repeat protein 21B (Ttc21b), found in Mus musculus (Mouse).